The chain runs to 373 residues: Trifolitoxin-processing protein TfxB (373 aa).

It to E.coli McbC which is involved in the processing of microcin B17 (MCCB17).

It is found in the cytoplasm. In terms of biological role, the actions of the proteins TfxB, TfxD and TfxF are implicated in the processing of the inactive trifolitoxin (TfxA) precursor into the active peptide. This chain is Trifolitoxin-processing protein TfxB (tfxB), found in Rhizobium leguminosarum bv. trifolii.